A 1101-amino-acid polypeptide reads, in one-letter code: Protein unc-13 homolog (1101 aa).

The MHD1 domain maps to 663 to 804 (VSVFPAADSL…ASKDDLVPPV (142 aa)). The region spanning 941 to 1051 (QSRLEGLIEA…YETRELIDDL (111 aa)) is the MHD2 domain.

Belongs to the unc-13 family. As to expression, expressed in roots, cotyledons, leaves, stems and flowers. Expressed in guard cells and mesophyll cells of leaves.

The protein localises to the cytoplasm. It localises to the cell membrane. Functionally, controls the tethering of the proton ATPase AHA1 to the plasma membrane. Is essential for stomatal opening in response to low concentration of carbon dioxide and light. The protein is Protein unc-13 homolog of Arabidopsis thaliana (Mouse-ear cress).